The chain runs to 165 residues: Disulfide bond formation protein B (165 aa).

Topologically, residues 1–11 (MICSKVPVRAW) are cytoplasmic. The helical transmembrane segment at 12–28 (FATLGLGCLGLVAVGMA) threads the bilayer. The Periplasmic segment spans residues 29-46 (LQTLLHLAPCPLCIFQRL). A disulfide bond links Cys-38 and Cys-41. The helical transmembrane segment at 47–61 (LYIMIGFVGLLGFVL) threads the bilayer. The Cytoplasmic segment spans residues 62–66 (PAGRL). Residues 67–84 (LWSTLAAGLGVLGFGVAA) form a helical membrane-spanning segment. The Periplasmic portion of the chain corresponds to 85–142 (YQTWMQAFPDLAPECGFTDPNAIERLVDWLGMEWPSMFLATGFCTSRDWELLGLSMAN). A disulfide bridge connects residues Cys-99 and Cys-128. The chain crosses the membrane as a helical span at residues 143 to 161 (WSVLIFAGIVAYAVLLFVR). The Cytoplasmic segment spans residues 162-165 (KDRA).

The protein belongs to the DsbB family.

It is found in the cell inner membrane. Its function is as follows. Required for disulfide bond formation in some periplasmic proteins. Acts by oxidizing the DsbA protein. This is Disulfide bond formation protein B from Dechloromonas aromatica (strain RCB).